The following is a 258-amino-acid chain: Methionine aminopeptidase (258 aa).

H84 is a substrate binding site. A divalent metal cation-binding residues include D102, D113, and H176. H183 contacts substrate. The a divalent metal cation site is built by E211 and E242.

It belongs to the peptidase M24A family. Methionine aminopeptidase type 1 subfamily. In terms of assembly, monomer. Co(2+) serves as cofactor. The cofactor is Zn(2+). It depends on Mn(2+) as a cofactor. Fe(2+) is required as a cofactor.

It carries out the reaction Release of N-terminal amino acids, preferentially methionine, from peptides and arylamides.. Removes the N-terminal methionine from nascent proteins. The N-terminal methionine is often cleaved when the second residue in the primary sequence is small and uncharged (Met-Ala-, Cys, Gly, Pro, Ser, Thr, or Val). Requires deformylation of the N(alpha)-formylated initiator methionine before it can be hydrolyzed. The polypeptide is Methionine aminopeptidase (Aquifex aeolicus (strain VF5)).